The primary structure comprises 460 residues: Endoglucanase C (460 aa).

An N-terminal signal peptide occupies residues 1-32 (MIKGSSLKRFKSLVMAAIFSVSIISTAIASSA). Glu99 acts as the Proton donor in catalysis. Catalysis depends on Asp155, which acts as the Nucleophile. The 61-residue stretch at 400-460 (KPDLKGDVNN…FAQLKVKLLN (61 aa)) folds into the Dockerin domain.

Belongs to the glycosyl hydrolase 8 (cellulase D) family. In terms of assembly, monomer. Post-translationally, there are two forms of the cellulase. The shorter form lacks probably the C-terminal reiterated domains.

It carries out the reaction Endohydrolysis of (1-&gt;4)-beta-D-glucosidic linkages in cellulose, lichenin and cereal beta-D-glucans.. Its pathway is glycan metabolism; cellulose degradation. Its function is as follows. The biological conversion of cellulose to glucose generally requires three types of hydrolytic enzymes: (1) Endoglucanases which cut internal beta-1,4-glucosidic bonds; (2) Exocellobiohydrolases that cut the disaccharide cellobiose from the non-reducing end of the cellulose polymer chain; (3) Beta-1,4-glucosidases which hydrolyze the cellobiose and other short cello-oligosaccharides to glucose. The chain is Endoglucanase C (celCCC) from Ruminiclostridium cellulolyticum (strain ATCC 35319 / DSM 5812 / JCM 6584 / H10) (Clostridium cellulolyticum).